The sequence spans 488 residues: Serine/threonine-protein kinase haspin homolog hrk1 (488 aa).

Residues 156 to 488 (TFEIQKIGEA…SLLNWVRQKY (333 aa)) enclose the Protein kinase domain. ATP contacts are provided by residues 162–170 (IGEASYSEV) and Lys184. Asp305 acts as the Proton acceptor in catalysis.

This sequence belongs to the protein kinase superfamily. Ser/Thr protein kinase family. Haspin subfamily. Interacts with pds5 and swi6.

It is found in the cytoplasm. The protein resides in the chromosome. The enzyme catalyses L-seryl-[protein] + ATP = O-phospho-L-seryl-[protein] + ADP + H(+). It catalyses the reaction L-threonyl-[protein] + ATP = O-phospho-L-threonyl-[protein] + ADP + H(+). Functionally, serine/threonine haspin-like protein kinase involved in cell cycle regulation. Acts in chromosomal passenger complex (CPC) targeting to centromeres by phosphorylating histone H3 at 'Thr3' (H3T3ph). The sequence is that of Serine/threonine-protein kinase haspin homolog hrk1 (hrk1) from Schizosaccharomyces pombe (strain 972 / ATCC 24843) (Fission yeast).